Here is a 100-residue protein sequence, read N- to C-terminus: Urease subunit gamma (100 aa).

This sequence belongs to the urease gamma subunit family. Heterotrimer of UreA (gamma), UreB (beta) and UreC (alpha) subunits. Three heterotrimers associate to form the active enzyme.

It localises to the cytoplasm. The catalysed reaction is urea + 2 H2O + H(+) = hydrogencarbonate + 2 NH4(+). It participates in nitrogen metabolism; urea degradation; CO(2) and NH(3) from urea (urease route): step 1/1. The sequence is that of Urease subunit gamma from Cereibacter sphaeroides (strain ATCC 17029 / ATH 2.4.9) (Rhodobacter sphaeroides).